Here is a 139-residue protein sequence, read N- to C-terminus: 3-hydroxyacyl-[acyl-carrier-protein] dehydratase FabZ (139 aa).

His46 is an active-site residue.

It belongs to the thioester dehydratase family. FabZ subfamily.

The protein localises to the cytoplasm. The enzyme catalyses a (3R)-hydroxyacyl-[ACP] = a (2E)-enoyl-[ACP] + H2O. In terms of biological role, involved in unsaturated fatty acids biosynthesis. Catalyzes the dehydration of short chain beta-hydroxyacyl-ACPs and long chain saturated and unsaturated beta-hydroxyacyl-ACPs. This Streptococcus pyogenes serotype M1 protein is 3-hydroxyacyl-[acyl-carrier-protein] dehydratase FabZ.